The chain runs to 205 residues: MKREKGLLIVLSGPAGVGKGTVCGALRNQNTAIEYSVSATTRKPREGEKHGVNYFFKTREQFEQMIEDGKLLEWAEYVGNYYGTPIDYVQETINAGKDIILEIEVQGAQKVRTVFPEGVFIFLAPPSLKELRDRIVGRGTETEDIINERMTVAKEEIDLMTMYDYVVENDKVEWAVERIKAIVTAEHCKRERLIKKYKELVEVEK.

Positions 6–184 (GLLIVLSGPA…AVERIKAIVT (179 aa)) constitute a Guanylate kinase-like domain. 13–20 (GPAGVGKG) is a binding site for ATP.

It belongs to the guanylate kinase family.

The protein resides in the cytoplasm. It catalyses the reaction GMP + ATP = GDP + ADP. In terms of biological role, essential for recycling GMP and indirectly, cGMP. The polypeptide is Guanylate kinase (Shouchella clausii (strain KSM-K16) (Alkalihalobacillus clausii)).